The sequence spans 669 residues: DNA mismatch repair protein MutL (669 aa).

The interval 357 to 379 is disordered; the sequence is EQRQNTENNQEKTFSSEESNSKS. Residues 361–379 are compositionally biased toward polar residues; sequence NTENNQEKTFSSEESNSKS.

Belongs to the DNA mismatch repair MutL/HexB family.

In terms of biological role, this protein is involved in the repair of mismatches in DNA. It is required for dam-dependent methyl-directed DNA mismatch repair. May act as a 'molecular matchmaker', a protein that promotes the formation of a stable complex between two or more DNA-binding proteins in an ATP-dependent manner without itself being part of a final effector complex. The sequence is that of DNA mismatch repair protein MutL from Staphylococcus aureus (strain Mu3 / ATCC 700698).